Reading from the N-terminus, the 182-residue chain is Adenine phosphoribosyltransferase (182 aa).

It belongs to the purine/pyrimidine phosphoribosyltransferase family. Homodimer.

It is found in the cytoplasm. The enzyme catalyses AMP + diphosphate = 5-phospho-alpha-D-ribose 1-diphosphate + adenine. Its pathway is purine metabolism; AMP biosynthesis via salvage pathway; AMP from adenine: step 1/1. In terms of biological role, catalyzes a salvage reaction resulting in the formation of AMP, that is energically less costly than de novo synthesis. The chain is Adenine phosphoribosyltransferase from Shewanella frigidimarina (strain NCIMB 400).